Reading from the N-terminus, the 148-residue chain is MKIILTQEVSGLGAPGDIVEVKNGYGRNYLLPQGFAIAWTKGAEKQVTVIKRARSAREIRDLGHANEVKGQLEGLKVALKARAGEGGRLFGSVTAAEIVAAVKAAGGPTLDRRRLELPGHIKSLGSYPVRIKLHPEVTAAFDLSVVQG.

This sequence belongs to the bacterial ribosomal protein bL9 family.

Functionally, binds to the 23S rRNA. This chain is Large ribosomal subunit protein bL9, found in Salinispora tropica (strain ATCC BAA-916 / DSM 44818 / JCM 13857 / NBRC 105044 / CNB-440).